The sequence spans 1315 residues: Claspin (1315 aa).

2 disordered regions span residues 22–276 (EAAD…AARL) and 345–474 (PADA…EQKT). Phosphoserine occurs at positions 26, 42, 46, 53, 65, and 67. Over residues 65-74 (SDSEAEDRDD) the composition is skewed to acidic residues. Positions 91–101 (NLHSGKSQSRS) are enriched in polar residues. A compositionally biased stretch (acidic residues) spans 108–118 (DSDESDMEETP). A phosphoserine mark is found at Ser-109, Ser-112, and Ser-119. The span at 119–128 (SQESPETQEA) shows a compositional bias: polar residues. 2 stretches are compositionally biased toward basic and acidic residues: residues 153-178 (LLRE…MEKI) and 186-197 (TRCEESDADRPL). A coiled-coil region spans residues 159–187 (EGKAKSKRRLEKEERTMEKIRRLKKKETR). The segment covering 205–228 (EDSDLFETGLEEENDSALEDEESL) has biased composition (acidic residues). Position 220 is a phosphoserine (Ser-220). Positions 235–245 (VKNKVKNRKKK) are enriched in basic residues. Ser-255 bears the Phosphoserine mark. 2 stretches are compositionally biased toward basic and acidic residues: residues 391 to 415 (ACGK…DDRP) and 455 to 470 (EELK…EGMP). A Phosphoserine modification is found at Ser-522. The stretch at 599–626 (EKLQMLKAKLQEAMKLRRLEERQKRQAL) forms a coiled coil. Residues 625–691 (ALFKLDNEDG…SSDIGKSVAL (67 aa)) form a disordered region. Acidic residues predominate over residues 632-657 (EDGFEEEEEEEEMTDESEEDGEEETT). The span at 669-679 (KDEKETDKENT) shows a compositional bias: basic and acidic residues. Ser-698, Ser-701, Ser-709, Ser-722, and Ser-740 each carry phosphoserine. The tract at residues 713-750 (MGYFPTEEKSETDEYLAKQSDKLDEDDSSSLLTKESSH) is disordered. A compositionally biased stretch (low complexity) spans 741 to 750 (SSLLTKESSH). 5 positions are modified to phosphoserine: Ser-785, Ser-787, Ser-810, Ser-816, and Ser-823. Residue Lys-868 is modified to N6-acetyllysine. CKB motif repeat units lie at residues 887–896 (ELLDLCTGQF) and 917–926 (ELLNLCSGKF). Thr-893 is subject to Phosphothreonine; by CHEK1. Disordered regions lie at residues 924–1002 (GKFP…NDEE) and 1032–1052 (EDEA…DGEE). Residue Ser-932 is modified to Phosphoserine. A CKB motif 3 repeat occupies 954 to 963 (EALALCSGSF). The tract at residues 966–1063 (DREEEGEEEE…DEYEEDVIDE (98 aa)) is acidic patch. 3 stretches are compositionally biased toward acidic residues: residues 967–977 (REEEGEEEEFG), 990–1002 (SDED…NDEE), and 1043–1052 (GSEDEYDGEE). Residues Ser-990, Ser-996, and Ser-998 each carry the phosphoserine modification. A coiled-coil region spans residues 1001–1036 (EELALDLEDDEEELLKQSEKMKRQMRLKKYLEDEAE). A phosphoserine mark is found at Ser-1133 and Ser-1265. The segment at 1264 to 1315 (LSPTKAEAAKDSSKPQVRRRGLSSMMSPSPKRLKTNGSSPGPKRSIFRYLES) is disordered.

Belongs to the claspin family. In terms of assembly, interacts (phosphorylation-dependent) with CHEK1; regulates CLSPN function in checkpoint for DNA damage and replication. Interacts with ATR and RAD9A and these interactions are slightly reduced during checkpoint activation. Interacts with BRCA1 and this interaction increases during checkpoint activation. Interacts with TIMELESS; the interaction is required for leading-strand replication. Associates with the MCM2-7 complex and other replisome factors. Interacts (via the acidic patch) with CDC7; the interaction is required for phosphorylation of MCM proteins and CLASPIN by CDC7. Interacts with PCNA. Interacts with FZR1. In terms of processing, phosphorylated. Undergoes ATR-dependent phosphorylation by CHEK1 during activation of DNA replication or damage checkpoints. Phosphorylation by CSNK1G1/CK1 promotes CHEK1 binding. Phosphorylated by CDC7 during DNA replication, phosphorylation inhibits interaction between the acidic patch and N-terminal segments leading to increased binding to DNA and PCNA. Ubiquitinated by the anaphase promoting complex/cyclosome (APC/C) during G1 phase, leading to its degradation by the proteasome. Ubiquitination is mediated via its interaction with FZR1/CDH1. Following DNA damage, it is deubiquitinated by USP28 in G2 phase, preventing its degradation. Post-translationally, proteolytically cleaved by caspase-7 (CASP7) in response to apoptosis, leading to its inactivation.

Its subcellular location is the nucleus. Its function is as follows. Required for checkpoint mediated cell cycle arrest in response to inhibition of DNA replication or to DNA damage induced by both ionizing and UV irradiation. Adapter protein which binds to BRCA1 and the checkpoint kinase CHEK1 and facilitates the ATR-dependent phosphorylation of both proteins. Also required to maintain normal rates of replication fork progression during unperturbed DNA replication. Binds directly to DNA, with particular affinity for branched or forked molecules and interacts with multiple protein components of the replisome such as the MCM2-7 complex and TIMELESS. Important for initiation of DNA replication, recruits kinase CDC7 to phosphorylate MCM2-7 components. The sequence is that of Claspin (Clspn) from Mus musculus (Mouse).